A 369-amino-acid polypeptide reads, in one-letter code: Flagellar P-ring protein (369 aa).

Residues 1–24 (MKTLHRCIGVALLALGALAGTAHA) form the signal peptide.

This sequence belongs to the FlgI family. As to quaternary structure, the basal body constitutes a major portion of the flagellar organelle and consists of four rings (L,P,S, and M) mounted on a central rod.

Its subcellular location is the periplasm. The protein localises to the bacterial flagellum basal body. In terms of biological role, assembles around the rod to form the L-ring and probably protects the motor/basal body from shearing forces during rotation. The chain is Flagellar P-ring protein from Ralstonia nicotianae (strain ATCC BAA-1114 / GMI1000) (Ralstonia solanacearum).